Here is a 131-residue protein sequence, read N- to C-terminus: Phosphoribosyl-AMP cyclohydrolase (131 aa).

Asp-89 is a binding site for Mg(2+). Zn(2+) is bound at residue Cys-90. Mg(2+) contacts are provided by Asp-91 and Asp-93. Residues Cys-106 and Cys-113 each contribute to the Zn(2+) site.

Belongs to the PRA-CH family. Homodimer. It depends on Mg(2+) as a cofactor. Requires Zn(2+) as cofactor.

It is found in the cytoplasm. The catalysed reaction is 1-(5-phospho-beta-D-ribosyl)-5'-AMP + H2O = 1-(5-phospho-beta-D-ribosyl)-5-[(5-phospho-beta-D-ribosylamino)methylideneamino]imidazole-4-carboxamide. Its pathway is amino-acid biosynthesis; L-histidine biosynthesis; L-histidine from 5-phospho-alpha-D-ribose 1-diphosphate: step 3/9. Functionally, catalyzes the hydrolysis of the adenine ring of phosphoribosyl-AMP. The polypeptide is Phosphoribosyl-AMP cyclohydrolase (Pyrobaculum aerophilum (strain ATCC 51768 / DSM 7523 / JCM 9630 / CIP 104966 / NBRC 100827 / IM2)).